Reading from the N-terminus, the 731-residue chain is Inclusion body clearance protein IML2 (731 aa).

The disordered stretch occupies residues 1 to 26 (MFRVFGSFGSKGNQSSGEEQSTKTKQ). Polar residues predominate over residues 10-26 (SKGNQSSGEEQSTKTKQ). 3 positions are modified to phosphoserine: Ser265, Ser268, and Ser378. Phosphothreonine is present on Thr380. 2 positions are modified to phosphoserine: Ser383 and Ser392.

Belongs to the IML2 family. Interacts with lipid droplet proteins PET10 and PDR16.

It localises to the cytoplasm. The protein resides in the nucleus. Inclusion body (IB) resident protein that interacts strongly with lipid droplet (LD) proteins. Involved in LD-mediated IB clearing after protein folding stress, probably by enabling access to the IBs of an LD-stored soluble sterol derivative that acts as a chaperone in inclusion clearing. This is Inclusion body clearance protein IML2 from Saccharomyces cerevisiae (strain ATCC 204508 / S288c) (Baker's yeast).